Consider the following 622-residue polypeptide: Chaperone protein HscA homolog (622 aa).

The protein belongs to the heat shock protein 70 family.

In terms of biological role, chaperone involved in the maturation of iron-sulfur cluster-containing proteins. Has a low intrinsic ATPase activity which is markedly stimulated by HscB. The chain is Chaperone protein HscA homolog from Burkholderia multivorans (strain ATCC 17616 / 249).